The following is a 284-amino-acid chain: MSMLPSFGFTQEQVACVCEVLQQGGNLERLGRFLWSLPACDHLHKNESVLKAKAVVAFHRGNFRELYKILESHQFSPHNHPKLQQLWLKAHYVEAEKLRGRPLGAVGKYRVRRKFPLPRTIWDGEETSYCFKEKSRGVLREWYAHNPYPSPREKRELAEATGLTTTQVSNWFKNRRQRDRAAEAKERENTENNNTSTNKQNQLSPLDGGKSLMSSSEEEFSPPQSPDQNSVLLLQGSLTHPGATSYSLSALSASQGSHGLQGHQHQLQDSLLGPLTSSLVDLGS.

The segment at residues 124–183 is a DNA-binding region (homeobox); the sequence is GEETSYCFKEKSRGVLREWYAHNPYPSPREKRELAEATGLTTTQVSNWFKNRRQRDRAAE. Positions 168-230 are disordered; sequence VSNWFKNRRQ…SPPQSPDQNS (63 aa). Residues 179–190 show a composition bias toward basic and acidic residues; it reads DRAAEAKERENT. Low complexity predominate over residues 191 to 202; that stretch reads ENNNTSTNKQNQ.

The protein belongs to the SIX/Sine oculis homeobox family.

The protein localises to the nucleus. It is found in the cytoplasm. Functionally, transcription factor that is involved in the regulation of cell proliferation, apoptosis and embryonic development. Depending on context, functions as a transcriptional repressor or activator. Required for the normal formation of pre-placodal ectoderm. This chain is Homeobox protein six1 (six1), found in Xenopus laevis (African clawed frog).